Consider the following 285-residue polypeptide: Undecaprenyl-diphosphatase (285 aa).

The next 7 helical transmembrane spans lie at 12-34 (IVIA…HAVI), 49-69 (IFLP…LVYF), 93-113 (IHIL…GGLL), 120-140 (LFGT…LLLL), 159-179 (LTYA…LPGI), 234-254 (VATI…AFLM), and 263-283 (WALS…FFIL).

The protein belongs to the UppP family.

The protein resides in the cell inner membrane. It carries out the reaction di-trans,octa-cis-undecaprenyl diphosphate + H2O = di-trans,octa-cis-undecaprenyl phosphate + phosphate + H(+). In terms of biological role, catalyzes the dephosphorylation of undecaprenyl diphosphate (UPP). Confers resistance to bacitracin. The polypeptide is Undecaprenyl-diphosphatase (Gluconacetobacter diazotrophicus (strain ATCC 49037 / DSM 5601 / CCUG 37298 / CIP 103539 / LMG 7603 / PAl5)).